We begin with the raw amino-acid sequence, 509 residues long: Seipin-3 (509 aa).

The disordered stretch occupies residues 33–73 (YDCLNSSPPANLRRRRLPMDTDSSSSSSTSSLESCEKRSTV). Low complexity predominate over residues 52-63 (DTDSSSSSSTSS). A run of 2 helical transmembrane segments spans residues 238-258 (LFCA…AFMI) and 455-475 (LFVW…LVFF).

The protein belongs to the seipin family. As to expression, expressed in seeds, seedlings, leaves, stems and roots. Not detected in flowers.

It localises to the endoplasmic reticulum membrane. Involved in lipid metabolism and lipid droplet (LD) morphology, number, and size. Supports the formation of small-sized LDs and modulates triacylglycerol accumulation. Induces probably a reorganization of the endoplasmic reticulum into LD-forming domains. In Arabidopsis thaliana (Mouse-ear cress), this protein is Seipin-3.